We begin with the raw amino-acid sequence, 347 residues long: Ketol-acid reductoisomerase (NADP(+)) (347 aa).

A KARI N-terminal Rossmann domain is found at 1-185 (MKIYYDEDAN…GGTRAGVLET (185 aa)). NADP(+) contacts are provided by residues 24–27 (YGSQ), arginine 47, serine 50, serine 52, and 82–85 (DEFQ). Histidine 107 is a catalytic residue. Glycine 133 provides a ligand contact to NADP(+). The region spanning 186–336 (SFKEETETDL…AELRSKMKFL (151 aa)) is the KARI C-terminal knotted domain. Residues aspartate 194, glutamate 198, glutamate 230, and glutamate 234 each contribute to the Mg(2+) site. Serine 255 serves as a coordination point for substrate.

This sequence belongs to the ketol-acid reductoisomerase family. The cofactor is Mg(2+).

The catalysed reaction is (2R)-2,3-dihydroxy-3-methylbutanoate + NADP(+) = (2S)-2-acetolactate + NADPH + H(+). The enzyme catalyses (2R,3R)-2,3-dihydroxy-3-methylpentanoate + NADP(+) = (S)-2-ethyl-2-hydroxy-3-oxobutanoate + NADPH + H(+). The protein operates within amino-acid biosynthesis; L-isoleucine biosynthesis; L-isoleucine from 2-oxobutanoate: step 2/4. It functions in the pathway amino-acid biosynthesis; L-valine biosynthesis; L-valine from pyruvate: step 2/4. Involved in the biosynthesis of branched-chain amino acids (BCAA). Catalyzes an alkyl-migration followed by a ketol-acid reduction of (S)-2-acetolactate (S2AL) to yield (R)-2,3-dihydroxy-isovalerate. In the isomerase reaction, S2AL is rearranged via a Mg-dependent methyl migration to produce 3-hydroxy-3-methyl-2-ketobutyrate (HMKB). In the reductase reaction, this 2-ketoacid undergoes a metal-dependent reduction by NADPH to yield (R)-2,3-dihydroxy-isovalerate. This Gamma-proteobacterium EBAC31A08 protein is Ketol-acid reductoisomerase (NADP(+)).